A 428-amino-acid chain; its full sequence is MLDIRLFRNEPDTVKSKIELRGDDPKVVDEILELDEQRRKLISATEEMKARRNKVSEEIALKKRNKENADDVIAEMRTLGDDIKEKDSQLNEIDSKMTGILCRIPNLISDDVPQGESDEDNVEVKKWGTPREFSFEPKAHWDIVEELKMADFDRAAKVSGARFVYLTNEGAQLERALMNYMITKHTTQHGYTEMMVPQLVNADTMYGTGQLPKFEEDLFKVEKEGLYTIPTAEVPLTNFYRNEIIQPGVLPEKFTGQSACFRSEAGSAGRDTRGLIRLHQFDKVEMVRFEQPEDSWNALEEMTTNAEAILEELGLPYRRVILCTGDIGFSASKTYDLEVWLPSYNDYKEISSCSNCTDFQARRANIRFKRDKAAKPELAHTLNGSGLAVGRTFAAIVENYQNEDGTVTIPEALVPFMGGKTQISKPVK.

231 to 233 lines the L-serine pocket; it reads TAE. 262–264 provides a ligand contact to ATP; it reads RSE. Glu-285 provides a ligand contact to L-serine. Residue 349 to 352 participates in ATP binding; the sequence is EISS. Ser-385 provides a ligand contact to L-serine.

The protein belongs to the class-II aminoacyl-tRNA synthetase family. Type-1 seryl-tRNA synthetase subfamily. As to quaternary structure, homodimer. The tRNA molecule binds across the dimer.

The protein resides in the cytoplasm. The catalysed reaction is tRNA(Ser) + L-serine + ATP = L-seryl-tRNA(Ser) + AMP + diphosphate + H(+). It catalyses the reaction tRNA(Sec) + L-serine + ATP = L-seryl-tRNA(Sec) + AMP + diphosphate + H(+). The protein operates within aminoacyl-tRNA biosynthesis; selenocysteinyl-tRNA(Sec) biosynthesis; L-seryl-tRNA(Sec) from L-serine and tRNA(Sec): step 1/1. Its function is as follows. Catalyzes the attachment of serine to tRNA(Ser). Is also able to aminoacylate tRNA(Sec) with serine, to form the misacylated tRNA L-seryl-tRNA(Sec), which will be further converted into selenocysteinyl-tRNA(Sec). This is Serine--tRNA ligase from Staphylococcus aureus (strain MRSA252).